The chain runs to 459 residues: Sensor histidine kinase SpaK (459 aa).

The Cytoplasmic segment spans residues 1-18 (MGIGFKGRKTLLRELVKY). The helical transmembrane segment at 19-39 (MVTLCISLVVLALLYIFINTI) threads the bilayer. Over 40–155 (AMNTGFSHPA…RKYLPNYELT (116 aa)) the chain is Extracellular. Residues 156 to 176 (SICILIILLIIVISIITTYFA) form a helical membrane-spanning segment. Residues 177-459 (NRLRKHFETL…VRVKIPLRNE (283 aa)) are Cytoplasmic-facing. In terms of domain architecture, Histidine kinase spans 244-458 (ALAHEIKIPI…EVRVKIPLRN (215 aa)). At His-247 the chain carries Phosphohistidine; by autocatalysis.

The protein localises to the cell membrane. It catalyses the reaction ATP + protein L-histidine = ADP + protein N-phospho-L-histidine.. Its function is as follows. Member of the two-component regulatory system SpaK/SpaR involved in the regulation of the biosynthesis of lantibiotic subtilin. SpaK may function as a membrane-associated protein kinase that phosphorylates SpaR in response to environmental signals. This Bacillus subtilis protein is Sensor histidine kinase SpaK (spaK).